The chain runs to 591 residues: L-fucose isomerase (591 aa).

Active-site proton acceptor residues include Glu337 and Asp361. Residues Glu337, Asp361, and His528 each contribute to the Mn(2+) site.

Belongs to the L-fucose isomerase family. As to quaternary structure, homohexamer. Requires Mn(2+) as cofactor.

Its subcellular location is the cytoplasm. The enzyme catalyses L-fucose = L-fuculose. Its pathway is carbohydrate degradation; L-fucose degradation; L-lactaldehyde and glycerone phosphate from L-fucose: step 1/3. Its function is as follows. Converts the aldose L-fucose into the corresponding ketose L-fuculose. This Klebsiella pneumoniae subsp. pneumoniae (strain ATCC 700721 / MGH 78578) protein is L-fucose isomerase.